A 293-amino-acid chain; its full sequence is uncharacterized protein (293 aa).

2 disordered regions span residues 1 to 23 (MGWP…AQTD) and 52 to 83 (ELQS…SELS). A compositionally biased stretch (basic and acidic residues) spans 8-17 (KPEDSKEEHG). A compositionally biased stretch (polar residues) spans 52 to 71 (ELQSYSHTSESPVETKTPTT).

This is an uncharacterized protein from Mus musculus (Mouse).